The sequence spans 91 residues: Molybdopterin synthase sulfur carrier subunit (91 aa).

A 1-thioglycine; alternate modification is found at Gly-91. A Glycyl adenylate; alternate modification is found at Gly-91.

Belongs to the MoaD family. MOCS2A subfamily. Heterotetramer; composed of 2 small (MOCS2A) and 2 large (MOCS2B) subunits. Post-translationally, C-terminal thiocarboxylation occurs in 2 steps, it is first acyl-adenylated (-COAMP) via the hesA/moeB/thiF part of MOCS3, then thiocarboxylated (-COSH) via the rhodanese domain of MOCS3.

The protein resides in the cytoplasm. The protein operates within cofactor biosynthesis; molybdopterin biosynthesis. In terms of biological role, acts as a sulfur carrier required for molybdopterin biosynthesis. Component of the molybdopterin synthase complex that catalyzes the conversion of precursor Z into molybdopterin by mediating the incorporation of 2 sulfur atoms into precursor Z to generate a dithiolene group. In the complex, serves as sulfur donor by being thiocarboxylated (-COSH) at its C-terminus by MOCS3. After interaction with MOCS2B, the sulfur is then transferred to precursor Z to form molybdopterin. The chain is Molybdopterin synthase sulfur carrier subunit from Anopheles gambiae (African malaria mosquito).